The following is a 274-amino-acid chain: Large ribosomal subunit protein uL2 (274 aa).

The disordered stretch occupies residues 197-274 (NSDHALEKSG…SKYIIERRKK (78 aa)). 2 stretches are compositionally biased toward basic residues: residues 207-220 (KAGRSRWLGRRPHN) and 244-274 (PRSRKGLYAKGLKTRAPKKHSSKYIIERRKK).

This sequence belongs to the universal ribosomal protein uL2 family. Part of the 50S ribosomal subunit. Forms a bridge to the 30S subunit in the 70S ribosome.

Functionally, one of the primary rRNA binding proteins. Required for association of the 30S and 50S subunits to form the 70S ribosome, for tRNA binding and peptide bond formation. It has been suggested to have peptidyltransferase activity; this is somewhat controversial. Makes several contacts with the 16S rRNA in the 70S ribosome. The polypeptide is Large ribosomal subunit protein uL2 (Porphyromonas gingivalis (strain ATCC BAA-308 / W83)).